The primary structure comprises 264 residues: MTPDSSPSSVDDPLFESGHRIFANKDLLKIGHVPEADRIVGRDEEISKLAKRLNGAVHGYSPENVMIYGKTGTGKSLVSKHVCQRAQNAAQDGVEIGTAYIDCAEDNTETQAISSLAAKLNNESSTGISVPHTGLSTSKYYKLLWKTLDAQFDSVIIILDEIDLMNDDSVLMKLSRAEEAGKIDCSVGVIAISNKIQYVDNVNERVKSSFQHKELFFKPYDANQLREIMFNREDFSSSTTTYSISWPGWTASSCSRARFKAATF.

Residues 73–77 (TGKSL), Y220, and R232 contribute to the ATP site.

Belongs to the CDC6/cdc18 family.

In terms of biological role, involved in regulation of DNA replication. The protein is ORC1-type DNA replication protein 2 (orc2) of Halobacterium salinarum (strain ATCC 700922 / JCM 11081 / NRC-1) (Halobacterium halobium).